The chain runs to 387 residues: Dual-specificity RNA methyltransferase RlmN (387 aa).

E93 acts as the Proton acceptor in catalysis. Residues 99 to 343 (EENRGTLCIS…TTVRKTRGDD (245 aa)) form the Radical SAM core domain. Residues C106 and C348 are joined by a disulfide bond. The [4Fe-4S] cluster site is built by C113, C117, and C120. S-adenosyl-L-methionine contacts are provided by residues 172–173 (GE), S204, 226–228 (SLH), and N305. Catalysis depends on C348, which acts as the S-methylcysteine intermediate.

The protein belongs to the radical SAM superfamily. RlmN family. [4Fe-4S] cluster is required as a cofactor.

It is found in the cytoplasm. The catalysed reaction is adenosine(2503) in 23S rRNA + 2 reduced [2Fe-2S]-[ferredoxin] + 2 S-adenosyl-L-methionine = 2-methyladenosine(2503) in 23S rRNA + 5'-deoxyadenosine + L-methionine + 2 oxidized [2Fe-2S]-[ferredoxin] + S-adenosyl-L-homocysteine. It catalyses the reaction adenosine(37) in tRNA + 2 reduced [2Fe-2S]-[ferredoxin] + 2 S-adenosyl-L-methionine = 2-methyladenosine(37) in tRNA + 5'-deoxyadenosine + L-methionine + 2 oxidized [2Fe-2S]-[ferredoxin] + S-adenosyl-L-homocysteine. In terms of biological role, specifically methylates position 2 of adenine 2503 in 23S rRNA and position 2 of adenine 37 in tRNAs. m2A2503 modification seems to play a crucial role in the proofreading step occurring at the peptidyl transferase center and thus would serve to optimize ribosomal fidelity. The protein is Dual-specificity RNA methyltransferase RlmN of Janthinobacterium sp. (strain Marseille) (Minibacterium massiliensis).